The following is a 345-amino-acid chain: NADH-ubiquinone oxidoreductase chain 2 (345 aa).

10 helical membrane-spanning segments follow: residues 1–21 (MNPL…ILTT), 26–46 (WVSA…IISM), 60–80 (FLIQ…NAHL), 96–115 (IALT…HFWL), 122–144 (VPIL…LLIM), 148–170 (LIPT…LGGL), 201–223 (TLLN…HLTM), 242–262 (SLFL…GFIP), 274–294 (NLTP…MFYL), and 323–343 (TSTL…TPTL).

This sequence belongs to the complex I subunit 2 family.

The protein localises to the mitochondrion inner membrane. The enzyme catalyses a ubiquinone + NADH + 5 H(+)(in) = a ubiquinol + NAD(+) + 4 H(+)(out). Core subunit of the mitochondrial membrane respiratory chain NADH dehydrogenase (Complex I) that is believed to belong to the minimal assembly required for catalysis. Complex I functions in the transfer of electrons from NADH to the respiratory chain. The immediate electron acceptor for the enzyme is believed to be ubiquinone. This is NADH-ubiquinone oxidoreductase chain 2 (MT-ND2) from Varanus nebulosus (Clouded monitor).